A 549-amino-acid polypeptide reads, in one-letter code: Chaperonin GroEL 5 (549 aa).

ATP contacts are provided by residues 30 to 33 (TLGP), Lys51, 87 to 91 (DGTTT), Gly415, and Asp495.

The protein belongs to the chaperonin (HSP60) family. As to quaternary structure, forms a cylinder of 14 subunits composed of two heptameric rings stacked back-to-back. Interacts with the co-chaperonin GroES.

It localises to the cytoplasm. The catalysed reaction is ATP + H2O + a folded polypeptide = ADP + phosphate + an unfolded polypeptide.. Its function is as follows. Together with its co-chaperonin GroES, plays an essential role in assisting protein folding. The GroEL-GroES system forms a nano-cage that allows encapsulation of the non-native substrate proteins and provides a physical environment optimized to promote and accelerate protein folding. This Mesorhizobium japonicum (strain LMG 29417 / CECT 9101 / MAFF 303099) (Mesorhizobium loti (strain MAFF 303099)) protein is Chaperonin GroEL 5.